We begin with the raw amino-acid sequence, 467 residues long: Trigger factor (467 aa).

Positions 162–243 (GDFVSIDLSA…LNSVKERHLP (82 aa)) constitute a PPIase FKBP-type domain. Residues 426–435 (EEGNELDLDE) are compositionally biased toward acidic residues. Residues 426–467 (EEGNELDLDELFGTQAGEEQGEQAEGTEATDEQSAKADAKAE) are disordered. A compositionally biased stretch (low complexity) spans 436–452 (LFGTQAGEEQGEQAEGT). The span at 458 to 467 (QSAKADAKAE) shows a compositional bias: basic and acidic residues.

This sequence belongs to the FKBP-type PPIase family. Tig subfamily.

The protein resides in the cytoplasm. It carries out the reaction [protein]-peptidylproline (omega=180) = [protein]-peptidylproline (omega=0). Involved in protein export. Acts as a chaperone by maintaining the newly synthesized protein in an open conformation. Functions as a peptidyl-prolyl cis-trans isomerase. In Saccharopolyspora erythraea (strain ATCC 11635 / DSM 40517 / JCM 4748 / NBRC 13426 / NCIMB 8594 / NRRL 2338), this protein is Trigger factor.